Consider the following 360-residue polypeptide: uncharacterized protein (360 aa).

The segment covering 22–32 (EEDVEPNEEAE) has biased composition (acidic residues). The tract at residues 22-55 (EEDVEPNEEAEGPGGVHKKRRGARKKNRRQRMEG) is disordered. A compositionally biased stretch (basic residues) spans 37–50 (VHKKRRGARKKNRR).

This is an uncharacterized protein from Caenorhabditis elegans.